The following is a 162-amino-acid chain: Transcription elongation factor GreA (162 aa).

Residues 45-74 (ENAEYEAAREKQAFIEGRIKELEDMTARAE) are a coiled coil.

The protein belongs to the GreA/GreB family.

Functionally, necessary for efficient RNA polymerase transcription elongation past template-encoded arresting sites. The arresting sites in DNA have the property of trapping a certain fraction of elongating RNA polymerases that pass through, resulting in locked ternary complexes. Cleavage of the nascent transcript by cleavage factors such as GreA or GreB allows the resumption of elongation from the new 3'terminus. GreA releases sequences of 2 to 3 nucleotides. The protein is Transcription elongation factor GreA of Rickettsia felis (strain ATCC VR-1525 / URRWXCal2) (Rickettsia azadi).